Consider the following 257-residue polypeptide: tRNA pseudouridine synthase A (257 aa).

Asp-43 functions as the Nucleophile in the catalytic mechanism. Substrate is bound at residue Tyr-94.

The protein belongs to the tRNA pseudouridine synthase TruA family.

It carries out the reaction uridine(38/39/40) in tRNA = pseudouridine(38/39/40) in tRNA. Functionally, formation of pseudouridine at positions 38, 39 and 40 in the anticodon stem and loop of transfer RNAs. In Pyrobaculum arsenaticum (strain DSM 13514 / JCM 11321 / PZ6), this protein is tRNA pseudouridine synthase A.